The chain runs to 278 residues: MKKNRAFLKWAGGKYPLLDDIKRHLPKGECLVEPFVGAGSVFLNTDFSRYILADINSDLISLYNIVKLRTDEYVQASRELFMPETNQAEVYYQLREEFNTCQDPFRRAVLFLYLNRYGYNGLCRYNLRGEFNVPFGRYKRPYFPEAELYHFAEKAQNAFFYCESYADSMARADKSSVVYCDPPYAPLSATANFTAYHTNSFSLTQQAHLAEIAENLVSNRIPVLISNHDTALTREWYQLAKLHVVKVRPSISSNGGTRKKVDELLALYQPGVATPARK.

S-adenosyl-L-methionine contacts are provided by Trp-10, Lys-14, Asp-54, and Asp-181.

The protein belongs to the N(4)/N(6)-methyltransferase family.

The catalysed reaction is a 2'-deoxyadenosine in DNA + S-adenosyl-L-methionine = an N(6)-methyl-2'-deoxyadenosine in DNA + S-adenosyl-L-homocysteine + H(+). In terms of biological role, an alpha subtype methylase, recognizes the double-stranded sequence 5'-GATC-3' and methylates A-2. May be involved in methyl-directed DNA mismatch repair, initiation of chromosome replication and gene expression. This chain is DNA adenine methylase (dam), found in Salmonella typhimurium.